The following is a 326-amino-acid chain: Putative ABC transporter ATP-binding protein MA_4020 (326 aa).

Polar residues predominate over residues 1–12 (MTISTLSSSYGN). Residues 1-34 (MTISTLSSSYGNAQDVPAEDSDRHGSIEPGSEKA) are disordered. The 236-residue stretch at 46–281 (LEVKNLCHRY…PELLRKAHLR (236 aa)) folds into the ABC transporter domain. 80–87 (GANGAGKS) provides a ligand contact to ATP.

The protein belongs to the ABC transporter superfamily.

It is found in the cell membrane. Probably part of an ABC transporter complex. Responsible for energy coupling to the transport system. The polypeptide is Putative ABC transporter ATP-binding protein MA_4020 (Methanosarcina acetivorans (strain ATCC 35395 / DSM 2834 / JCM 12185 / C2A)).